We begin with the raw amino-acid sequence, 95 residues long: Non-specific lipid-transfer protein (95 aa).

3 disulfides stabilise this stretch: Cys4–Cys52, Cys14–Cys29, and Cys50–Cys90.

It belongs to the plant LTP family. As to expression, seeds.

Plant non-specific lipid-transfer proteins transfer phospholipids as well as galactolipids across membranes. May play a role in wax or cutin deposition in the cell walls of expanding epidermal cells and certain secretory tissues. In Eleusine coracana (Indian finger millet), this protein is Non-specific lipid-transfer protein.